Here is a 485-residue protein sequence, read N- to C-terminus: UBX domain-containing protein 11 (485 aa).

Residues M1 to R26 are disordered. Positions H67 to D143 form a coiled coil. One can recognise an SEP domain in the interval L224–P288. A UBX domain is found at P386–L463. A phosphoserine mark is found at S479 and S483.

In terms of assembly, interacts with GNA12, GNA13, RND1, RND2 and RND3. Strongly expressed in testis. Also expressed in lung, brain and thymus.

The protein resides in the cytoplasm. Its subcellular location is the cytoskeleton. In terms of biological role, may be involved in the reorganization of actin cytoskeleton mediated by RND1, RND2 and RND3. Promotes RHOA activation mediated by GNA12 and GNA13. The chain is UBX domain-containing protein 11 (Ubxn11) from Rattus norvegicus (Rat).